A 256-amino-acid chain; its full sequence is Uridylate kinase (256 aa).

10 to 13 serves as a coordination point for ATP; the sequence is KLSG. Gly52 provides a ligand contact to UMP. ATP is bound by residues Gly53 and Arg57. UMP is bound by residues Asp72 and 134–141; that span reads NGQPFLTT. 2 residues coordinate ATP: Tyr168 and Asp171.

It belongs to the UMP kinase family. Homohexamer.

The protein localises to the cytoplasm. The enzyme catalyses UMP + ATP = UDP + ADP. It functions in the pathway pyrimidine metabolism; CTP biosynthesis via de novo pathway; UDP from UMP (UMPK route): step 1/1. With respect to regulation, inhibited by UTP. Functionally, catalyzes the reversible phosphorylation of UMP to UDP. This chain is Uridylate kinase, found in Frankia alni (strain DSM 45986 / CECT 9034 / ACN14a).